Here is a 326-residue protein sequence, read N- to C-terminus: Vitamin B12 import system permease protein BtuC (326 aa).

9 consecutive transmembrane segments (helical) span residues 15–35 (WLLC…CAGE), 61–81 (LAVL…QALF), 88–108 (PGLL…VLLG), 112–132 (LPNW…TLIL), 146–166 (LLAG…AIYF), 184–204 (GGVD…LLWI), 240–260 (GWMV…GLVI), 274–294 (VLLP…DIVA), and 302–322 (ELPI…WLLL).

It belongs to the binding-protein-dependent transport system permease family. FecCD subfamily. The complex is composed of two ATP-binding proteins (BtuD), two transmembrane proteins (BtuC) and a solute-binding protein (BtuF).

It localises to the cell inner membrane. In terms of biological role, part of the ABC transporter complex BtuCDF involved in vitamin B12 import. Involved in the translocation of the substrate across the membrane. The chain is Vitamin B12 import system permease protein BtuC from Escherichia coli O7:K1 (strain IAI39 / ExPEC).